Here is a 731-residue protein sequence, read N- to C-terminus: T-cell activation Rho GTPase-activating protein (731 aa).

Residues 88 to 277 (QPLSIICGDS…FLIDNCFEIF (190 aa)) form the Rho-GAP domain. 3 disordered regions span residues 288–421 (TSDD…AEDP), 464–507 (SLDA…IKKH), and 641–662 (HHVE…GLSP). Over residues 299–311 (SDVSTLQNDSAYD) the composition is skewed to polar residues. The span at 319-329 (SNSSSGISSPS) shows a compositional bias: low complexity. The segment covering 380 to 399 (SMPSSQECLESRVTNQTLTK) has biased composition (polar residues). Serine 400 carries the phosphoserine modification. The segment covering 464–480 (SLDASSDSSPVASPSSP) has biased composition (low complexity). 2 stretches are compositionally biased toward basic and acidic residues: residues 494–503 (KTEKGKPSRE) and 641–652 (HHVEDSRHRGSK).

Its function is as follows. May function as a GTPase-activating protein and may play important roles during T-cell activation. The polypeptide is T-cell activation Rho GTPase-activating protein (TAGAP) (Homo sapiens (Human)).